Here is a 356-residue protein sequence, read N- to C-terminus: Peptide chain release factor 1 (356 aa).

Position 233 is an N5-methylglutamine (Gln233).

This sequence belongs to the prokaryotic/mitochondrial release factor family. Methylated by PrmC. Methylation increases the termination efficiency of RF1.

The protein resides in the cytoplasm. Its function is as follows. Peptide chain release factor 1 directs the termination of translation in response to the peptide chain termination codons UAG and UAA. This Halalkalibacterium halodurans (strain ATCC BAA-125 / DSM 18197 / FERM 7344 / JCM 9153 / C-125) (Bacillus halodurans) protein is Peptide chain release factor 1.